Consider the following 540-residue polypeptide: Cytokinin dehydrogenase 5 (540 aa).

An N-terminal signal peptide occupies residues 1-22; the sequence is MNREMTSSFLLLTFAICKLIIA. The region spanning 63–241 is the FAD-binding PCMH-type domain; the sequence is SPEEPLAVLH…TRARISLEPA (179 aa). FAD is bound by residues Ala-97, Gly-99, and Gly-101. Pros-8alpha-FAD histidine is present on His-102. FAD-binding residues include Ser-103, Gln-107, Asp-165, Thr-170, Ser-176, Ile-180, and Ile-231. 2 N-linked (GlcNAc...) asparagine glycosylation sites follow: Asn-310 and Asn-406. Residues Tyr-479 and Gln-517 each coordinate FAD.

Belongs to the oxygen-dependent FAD-linked oxidoreductase family. Requires FAD as cofactor. In terms of tissue distribution, expressed in the developing leaf petioles and in the rib zone of the axillary shoot meristems. In roots, expressed in the vascular cylinder within the root apical meristem and only faintly detectable in the differentiated root.

Its subcellular location is the secreted. The protein resides in the extracellular space. The catalysed reaction is N(6)-dimethylallyladenine + A + H2O = 3-methyl-2-butenal + adenine + AH2. In terms of biological role, catalyzes the oxidation of cytokinins, a family of N(6)-substituted adenine derivatives that are plant hormones, where the substituent is an isopentenyl group. In association with CKX3 regulates the activity of the reproductive meristems, flower organ size and ovule formation. The polypeptide is Cytokinin dehydrogenase 5 (CKX5) (Arabidopsis thaliana (Mouse-ear cress)).